Consider the following 122-residue polypeptide: uncharacterized protein (122 aa).

The stretch at 46–116 forms a coiled coil; sequence KDLQKEVDDL…HQLENKRELN (71 aa).

This is an uncharacterized protein from Invertebrate iridescent virus 6 (IIV-6).